Here is a 407-residue protein sequence, read N- to C-terminus: tRNA (guanine(9)-N1)-methyltransferase (407 aa).

Residues 1-19 (MDLDPAHKPSQAEETKEQG) show a composition bias toward basic and acidic residues. 2 disordered regions span residues 1–105 (MDLD…VRKR) and 220–256 (ENMI…PRPE). Residues 20–32 (NEQGQVEQNQAQQ) show a composition bias toward low complexity. Residues 91–103 (LKRKDSRIARKVR) are compositionally biased toward basic residues. Positions 120–356 (ANKQKPPSVN…SVIPKRKGGK (237 aa)) constitute an SAM-dependent MTase TRM10-type domain. Residues 263 to 264 (LS), Gly-283, 287 to 291 (DKNRE), Cys-295, Leu-309, and 321 to 323 (TVL) each bind S-adenosyl-L-methionine. Asp-287 serves as the catalytic Proton acceptor. The tract at residues 353–407 (KGGKLKEQQGASGETQETEEAEAEDPEEENEETKDPDAEASASKQNTPKVEVTSK) is disordered. Residues 368–386 (QETEEAEAEDPEEENEETK) show a composition bias toward acidic residues. Residues 394–407 (ASKQNTPKVEVTSK) are compositionally biased toward polar residues.

Belongs to the class IV-like SAM-binding methyltransferase superfamily. TRM10 family. As to quaternary structure, monomer.

Its subcellular location is the cytoplasm. It localises to the nucleus. It catalyses the reaction guanosine(9) in tRNA + S-adenosyl-L-methionine = N(1)-methylguanosine(9) in tRNA + S-adenosyl-L-homocysteine + H(+). Functionally, S-adenosyl-L-methionine-dependent guanine N(1)-methyltransferase that catalyzes the formation of N(1)-methylguanine at position 9 (m1G9) in cytoplasmic tRNA. The polypeptide is tRNA (guanine(9)-N1)-methyltransferase (Gibberella zeae (strain ATCC MYA-4620 / CBS 123657 / FGSC 9075 / NRRL 31084 / PH-1) (Wheat head blight fungus)).